Here is a 213-residue protein sequence, read N- to C-terminus: Adenylate kinase (213 aa).

ATP is bound at residue 10–15; the sequence is GCGKGT. Positions 30–59 are NMP; that stretch reads STGDLMRKEISLNTTLGLKCQEYMNAGKYV. AMP is bound by residues T31, R36, 57-59, 83-86, and Q90; these read KYV and GYPR. The interval 124-161 is LID; the sequence is NRLVCPLCKASFNLETRKPKQEGLCDFDNTKLVKRSDD. ATP is bound at residue R125. Residues C128 and C131 each contribute to the Zn(2+) site. 134 to 135 serves as a coordination point for ATP; it reads SF. The Zn(2+) site is built by C148 and D151. AMP contacts are provided by R158 and R169. Position 197 (N197) interacts with ATP.

This sequence belongs to the adenylate kinase family. Monomer.

The protein localises to the cytoplasm. It carries out the reaction AMP + ATP = 2 ADP. It participates in purine metabolism; AMP biosynthesis via salvage pathway; AMP from ADP: step 1/1. Catalyzes the reversible transfer of the terminal phosphate group between ATP and AMP. Plays an important role in cellular energy homeostasis and in adenine nucleotide metabolism. This is Adenylate kinase from Mycoplasma capricolum subsp. capricolum (strain California kid / ATCC 27343 / NCTC 10154).